Consider the following 351-residue polypeptide: Protein Wnt-4 (351 aa).

Positions 1-22 are cleaved as a signal peptide; the sequence is MTPEYFLRSLLMMILAVFSANA. Cystine bridges form between cysteine 78–cysteine 89, cysteine 128–cysteine 136, cysteine 138–cysteine 155, cysteine 206–cysteine 220, cysteine 208–cysteine 215, cysteine 280–cysteine 311, cysteine 296–cysteine 306, cysteine 310–cysteine 350, cysteine 326–cysteine 341, cysteine 328–cysteine 338, and cysteine 333–cysteine 334. A glycan (N-linked (GlcNAc...) asparagine) is linked at asparagine 88. Serine 212 carries O-palmitoleoyl serine; by PORCN lipidation. Asparagine 297 carries an N-linked (GlcNAc...) asparagine glycan.

This sequence belongs to the Wnt family. Palmitoleoylation is required for efficient binding to frizzled receptors. Depalmitoleoylation leads to Wnt signaling pathway inhibition. Expressed in the brain and floor plate. In the developing pronephros, expressed in the proximal tubules and nephrostomes but absent from the pronephric duct.

It localises to the secreted. The protein localises to the extracellular space. Its subcellular location is the extracellular matrix. Functionally, ligand for members of the frizzled family of seven transmembrane receptors. Plays an important role in embryonic kidney development. Acts downstream of Notch signaling during pronephric kidney development. During early pronephros development, patterns the proximal pronephric anlagen to promote glomus and nephrostome formation. Also required later in pronephros development for tubulogenesis. The protein is Protein Wnt-4 (wnt4) of Xenopus laevis (African clawed frog).